A 260-amino-acid chain; its full sequence is Snake venom serine protease pallabin (260 aa).

The N-terminal stretch at 1-18 (MVLIRVLANLLILQLSYA) is a signal peptide. The propeptide occupies 19 to 24 (QKSSKL). A Peptidase S1 domain is found at 25 to 251 (VIGGDECNIN…HLDWIENIIA (227 aa)). 6 cysteine pairs are disulfide-bonded: C31–C163, C50–C66, C98–C258, C142–C212, C174–C191, and C202–C227. Residue H65 is the Charge relay system of the active site. N103 carries N-linked (GlcNAc...) asparagine glycosylation. D110 serves as the catalytic Charge relay system. S206 acts as the Charge relay system in catalysis.

It belongs to the peptidase S1 family. Snake venom subfamily. As to quaternary structure, monomer. In terms of tissue distribution, expressed by the venom gland.

The protein resides in the secreted. Its function is as follows. Snake venom serine protease that may act in the hemostasis system of the prey. This chain is Snake venom serine protease pallabin (JZTHR5), found in Gloydius halys (Chinese water mocassin).